A 1424-amino-acid chain; its full sequence is S-layer protein A (1424 aa).

A signal peptide spans 1–24; the sequence is MNKLVGLLVSSLFLASILIGIAPA. Residues asparagine 60, asparagine 70, asparagine 276, asparagine 295, asparagine 342, asparagine 358, asparagine 377, asparagine 468, asparagine 517, asparagine 545, asparagine 559, asparagine 581, asparagine 633, asparagine 714, asparagine 875, asparagine 914, asparagine 955, asparagine 989, asparagine 1018, asparagine 1042, asparagine 1093, asparagine 1134, asparagine 1197, asparagine 1217, asparagine 1252, asparagine 1276, asparagine 1304, and asparagine 1419 are each glycosylated (N-linked (GlcNAc...) asparagine).

It belongs to the Sulfolobales SlaA family. The mushroom-shaped unit cells of the Sulfolobales' S-layers may consist of three SlaB subunits and six SlaA subunits. Glycosylated. C-terminal glycosylation sites are modified with a heterogeneous family of glycans, with the largest having a composition Glc(1)Man(2)GlcNAc(2) plus 6-sulfoquinovose (QuiS).

The protein resides in the secreted. It is found in the cell wall. Its subcellular location is the S-layer. Its function is as follows. S-layer large protein. May form the highly ordered outer sheath. This Sulfolobus acidocaldarius (strain ATCC 33909 / DSM 639 / JCM 8929 / NBRC 15157 / NCIMB 11770) protein is S-layer protein A.